The following is a 675-amino-acid chain: Polyphosphate kinase (675 aa).

Residue asparagine 42 coordinates ATP. Mg(2+)-binding residues include arginine 372 and arginine 401. Catalysis depends on histidine 431, which acts as the Phosphohistidine intermediate. Residues tyrosine 464, arginine 558, and histidine 586 each contribute to the ATP site.

The protein belongs to the polyphosphate kinase 1 (PPK1) family. Mg(2+) is required as a cofactor. Post-translationally, an intermediate of this reaction is the autophosphorylated ppk in which a phosphate is covalently linked to a histidine residue through a N-P bond.

It carries out the reaction [phosphate](n) + ATP = [phosphate](n+1) + ADP. Its function is as follows. Catalyzes the reversible transfer of the terminal phosphate of ATP to form a long-chain polyphosphate (polyP). The polypeptide is Polyphosphate kinase (Helicobacter pylori (strain ATCC 700392 / 26695) (Campylobacter pylori)).